We begin with the raw amino-acid sequence, 442 residues long: MDDRKFSVLIAGGGSTYTPGIVLTLLDHIQKFPLRKLKFYDIDGERQQRVADACEILVKERAPEVEFLATTDPEEAFTDVDFVMAQIRVGKYAMRSLDEKIPLKHGVVGQETTGPGGIAYGLRSIPGVIGLVDYMEKYSPNAWMLNYSNPAAIVAEATRRLRPHSRIINICDMPIGIMDRMAQIVGLKDRNDLVFRYYGLNHFGWWTDVRDKTGKDLMPALKQYVAKNGYWLGDKDKDTEASWVSTFKKAADVYALDPSTLPNTYLKYYLYPKYVVEHSDPNYTRTDEVEAYREKHVFDECDRIIAAGTAADTHFKSDDHATYIVDLCTAIAYDTKQRMLAIVPNDGAIENIDPEAMVEVPCLFGANGAERLAMGKAATFQKGLITEQNCVEKLTVDAFEQQSYTKLWEAMSLCKIVPDASVAKEILDEMVVANKDYWPELK.

6–72 (FSVLIAGGGS…PEVEFLATTD (67 aa)) is a binding site for NAD(+). Substrate contacts are provided by arginine 95 and asparagine 149. Cysteine 171 is a binding site for Mn(2+). Aspartate 172 serves as the catalytic Proton donor. Mn(2+) is bound at residue histidine 202. Tyrosine 265 (proton acceptor) is an active-site residue. A substrate-binding site is contributed by arginine 285.

Belongs to the glycosyl hydrolase 4 family. As to quaternary structure, homodimer. May also form homotetramer. The cofactor is Mn(2+). Requires Co(2+) as cofactor. Ni(2+) is required as a cofactor. It depends on Fe(2+) as a cofactor. Mg(2+) serves as cofactor. The cofactor is NAD(+).

It catalyses the reaction alpha-maltose 6'-phosphate + H2O = D-glucose 6-phosphate + D-glucose. Is inhibited by EDTA in vitro. Its function is as follows. Is probably involved in the catabolism of alpha-glycosides accumulated via a phosphoenolpyruvate-dependent phosphotransferase system (PEP-PTS). Hydrolyzes a wide variety of 6-phospho-alpha-D-glucosides including the five isomeric derivatives of sucrose, i.e. trehalulose-6'-phosphate, turanose-6'-phosphate, maltulose-6'-phosphate, leucrose-6'-phosphate, and palatinose-6'-phosphate, but is not active on sucrose-6-phosphate. Can also hydrolyze maltose-6'-phosphate and methyl-alpha-glucose-6-phosphate, and poorly, trehalose-6-phosphate. Fails to hydrolyze beta-O-linked phosphorylated disaccharides such as cellobiose-6'-phosphate and gentiobiose-6'-phosphate. Does not seem to be involved in maltose catabolism. This chain is 6-phospho-alpha-glucosidase 1 (simA), found in Lacticaseibacillus paracasei (strain ATCC 334 / BCRC 17002 / CCUG 31169 / CIP 107868 / KCTC 3260 / NRRL B-441) (Lactobacillus paracasei).